Consider the following 448-residue polypeptide: Ribosomal protein uS12 methylthiotransferase RimO (448 aa).

In terms of domain architecture, MTTase N-terminal spans 6-116 (PKVGIVSLGC…VVEAVHAAIP (111 aa)). The [4Fe-4S] cluster site is built by Cys-15, Cys-51, Cys-80, Cys-147, Cys-151, and Cys-154. The Radical SAM core domain maps to 133–371 (LTPHHYAYLK…EAARQIADER (239 aa)). One can recognise a TRAM domain in the interval 373–439 (AAKEGTRIEV…DYDLWGDVVE (67 aa)).

Belongs to the methylthiotransferase family. RimO subfamily. It depends on [4Fe-4S] cluster as a cofactor.

It localises to the cytoplasm. It carries out the reaction L-aspartate(89)-[ribosomal protein uS12]-hydrogen + (sulfur carrier)-SH + AH2 + 2 S-adenosyl-L-methionine = 3-methylsulfanyl-L-aspartate(89)-[ribosomal protein uS12]-hydrogen + (sulfur carrier)-H + 5'-deoxyadenosine + L-methionine + A + S-adenosyl-L-homocysteine + 2 H(+). Catalyzes the methylthiolation of an aspartic acid residue of ribosomal protein uS12. The sequence is that of Ribosomal protein uS12 methylthiotransferase RimO from Paramagnetospirillum magneticum (strain ATCC 700264 / AMB-1) (Magnetospirillum magneticum).